A 103-amino-acid chain; its full sequence is DNA-directed RNA polymerase subunit omega (103 aa).

Positions 52-103 are disordered; sequence EIESGNVTIHPDPEGKREAVRRRIEEEKRRKEEEEKKIKEQIAKEKEDGEKI. A compositionally biased stretch (basic and acidic residues) spans 62–103; sequence PDPEGKREAVRRRIEEEKRRKEEEEKKIKEQIAKEKEDGEKI.

Belongs to the RNA polymerase subunit omega family. In terms of assembly, the RNAP catalytic core consists of 2 alpha, 1 beta, 1 beta' and 1 omega subunit. When a sigma factor is associated with the core the holoenzyme is formed, which can initiate transcription.

The catalysed reaction is RNA(n) + a ribonucleoside 5'-triphosphate = RNA(n+1) + diphosphate. Promotes RNA polymerase assembly. Latches the N- and C-terminal regions of the beta' subunit thereby facilitating its interaction with the beta and alpha subunits. This chain is DNA-directed RNA polymerase subunit omega, found in Streptococcus pneumoniae serotype 19F (strain G54).